A 149-amino-acid chain; its full sequence is Nucleoside diphosphate kinase (149 aa).

Residues Lys9, Phe57, Arg85, Thr91, Arg102, and Asn112 each contribute to the ATP site. The active-site Pros-phosphohistidine intermediate is the His115.

Belongs to the NDK family. In terms of assembly, homotetramer. Mg(2+) serves as cofactor.

The protein localises to the cytoplasm. It catalyses the reaction a 2'-deoxyribonucleoside 5'-diphosphate + ATP = a 2'-deoxyribonucleoside 5'-triphosphate + ADP. The enzyme catalyses a ribonucleoside 5'-diphosphate + ATP = a ribonucleoside 5'-triphosphate + ADP. Its function is as follows. Major role in the synthesis of nucleoside triphosphates other than ATP. The ATP gamma phosphate is transferred to the NDP beta phosphate via a ping-pong mechanism, using a phosphorylated active-site intermediate. This Heliobacterium modesticaldum (strain ATCC 51547 / Ice1) protein is Nucleoside diphosphate kinase.